Here is a 552-residue protein sequence, read N- to C-terminus: uncharacterized protein (552 aa).

A DhaL domain is found at 8–200; the sequence is KLFADMIIQG…LLCVYEGFLK (193 aa).

This is an uncharacterized protein from Staphylococcus epidermidis (strain ATCC 35984 / DSM 28319 / BCRC 17069 / CCUG 31568 / BM 3577 / RP62A).